A 186-amino-acid polypeptide reads, in one-letter code: Ribosome-recycling factor (186 aa).

This sequence belongs to the RRF family.

It localises to the cytoplasm. Its function is as follows. Responsible for the release of ribosomes from messenger RNA at the termination of protein biosynthesis. May increase the efficiency of translation by recycling ribosomes from one round of translation to another. In Paracidovorax citrulli (strain AAC00-1) (Acidovorax citrulli), this protein is Ribosome-recycling factor.